The following is a 502-amino-acid chain: Protein ANKUB1 (502 aa).

The sequence is that of Protein ANKUB1 (ANKUB1) from Homo sapiens (Human).